Consider the following 338-residue polypeptide: RNA 3'-terminal phosphate cyclase (338 aa).

ATP-binding positions include Gln103 and Tyr283 to Gln287. The active-site Tele-AMP-histidine intermediate is the His308.

It belongs to the RNA 3'-terminal cyclase family. Type 1 subfamily.

Its subcellular location is the cytoplasm. The enzyme catalyses a 3'-end 3'-phospho-ribonucleotide-RNA + ATP = a 3'-end 2',3'-cyclophospho-ribonucleotide-RNA + AMP + diphosphate. Catalyzes the conversion of 3'-phosphate to a 2',3'-cyclic phosphodiester at the end of RNA. The mechanism of action of the enzyme occurs in 3 steps: (A) adenylation of the enzyme by ATP; (B) transfer of adenylate to an RNA-N3'P to produce RNA-N3'PP5'A; (C) and attack of the adjacent 2'-hydroxyl on the 3'-phosphorus in the diester linkage to produce the cyclic end product. The biological role of this enzyme is unknown but it is likely to function in some aspects of cellular RNA processing. The sequence is that of RNA 3'-terminal phosphate cyclase from Escherichia coli O9:H4 (strain HS).